A 145-amino-acid chain; its full sequence is Hemoglobin subunit beta (145 aa).

One can recognise a Globin domain in the interval 1–145 (MLTSEEKAAV…VANALAHRYH (145 aa)). At threonine 11 the chain carries Phosphothreonine. N6-acetyllysine is present on lysine 58. Histidine 62 lines the heme b pocket. Lysine 81 carries the N6-acetyllysine modification. Residue histidine 91 participates in heme b binding. An S-nitrosocysteine modification is found at cysteine 92.

The protein belongs to the globin family. Heterotetramer of two alpha chains and two beta chains. As to expression, red blood cells.

Its function is as follows. Involved in oxygen transport from the lung to the various peripheral tissues. This Rangifer tarandus (Reindeer) protein is Hemoglobin subunit beta (HBB).